The sequence spans 195 residues: Imidazole glycerol phosphate synthase subunit HisH (195 aa).

Positions 1–195 (MIAVVDLGIG…LRLLENFRRL (195 aa)) constitute a Glutamine amidotransferase type-1 domain. The active-site Nucleophile is C72. Active-site residues include H177 and E179.

In terms of assembly, heterodimer of HisH and HisF.

It is found in the cytoplasm. The catalysed reaction is 5-[(5-phospho-1-deoxy-D-ribulos-1-ylimino)methylamino]-1-(5-phospho-beta-D-ribosyl)imidazole-4-carboxamide + L-glutamine = D-erythro-1-(imidazol-4-yl)glycerol 3-phosphate + 5-amino-1-(5-phospho-beta-D-ribosyl)imidazole-4-carboxamide + L-glutamate + H(+). It catalyses the reaction L-glutamine + H2O = L-glutamate + NH4(+). It participates in amino-acid biosynthesis; L-histidine biosynthesis; L-histidine from 5-phospho-alpha-D-ribose 1-diphosphate: step 5/9. In terms of biological role, IGPS catalyzes the conversion of PRFAR and glutamine to IGP, AICAR and glutamate. The HisH subunit catalyzes the hydrolysis of glutamine to glutamate and ammonia as part of the synthesis of IGP and AICAR. The resulting ammonia molecule is channeled to the active site of HisF. This chain is Imidazole glycerol phosphate synthase subunit HisH, found in Thermococcus kodakarensis (strain ATCC BAA-918 / JCM 12380 / KOD1) (Pyrococcus kodakaraensis (strain KOD1)).